Consider the following 852-residue polypeptide: Protein mono-ADP-ribosyltransferase PARP8 (852 aa).

Disordered stretches follow at residues 113-134 (NGEE…NDSE) and 289-310 (SPSY…EQDG). A compositionally biased stretch (acidic residues) spans 123–134 (VEEDSEGDNDSE). C332, C366, C375, and C394 each carry ADP-ribosylcysteine. In terms of domain architecture, PARP catalytic spans 615 to 842 (EMTQAPYLEI…QEGGIHKEIL (228 aa)). The disordered stretch occupies residues 748–775 (QKVSSKDEPASSSKSSNASQSQKKGQQS). Over residues 757–775 (ASSSKSSNASQSQKKGQQS) the composition is skewed to low complexity.

The protein belongs to the ARTD/PARP family. Post-translationally, auto-mono-ADP-ribosylated.

It catalyses the reaction L-cysteinyl-[protein] + NAD(+) = S-(ADP-D-ribosyl)-L-cysteinyl-[protein] + nicotinamide + H(+). Functionally, mono-ADP-ribosyltransferase that mediates mono-ADP-ribosylation of target proteins. This chain is Protein mono-ADP-ribosyltransferase PARP8, found in Mus musculus (Mouse).